We begin with the raw amino-acid sequence, 201 residues long: ATP-dependent Clp protease proteolytic subunit (201 aa).

The Nucleophile role is filled by Ser-98. The active site involves His-123.

Belongs to the peptidase S14 family. In terms of assembly, fourteen ClpP subunits assemble into 2 heptameric rings which stack back to back to give a disk-like structure with a central cavity, resembling the structure of eukaryotic proteasomes.

It localises to the cytoplasm. The catalysed reaction is Hydrolysis of proteins to small peptides in the presence of ATP and magnesium. alpha-casein is the usual test substrate. In the absence of ATP, only oligopeptides shorter than five residues are hydrolyzed (such as succinyl-Leu-Tyr-|-NHMec, and Leu-Tyr-Leu-|-Tyr-Trp, in which cleavage of the -Tyr-|-Leu- and -Tyr-|-Trp bonds also occurs).. Functionally, cleaves peptides in various proteins in a process that requires ATP hydrolysis. Has a chymotrypsin-like activity. Plays a major role in the degradation of misfolded proteins. This chain is ATP-dependent Clp protease proteolytic subunit, found in Rickettsia felis (strain ATCC VR-1525 / URRWXCal2) (Rickettsia azadi).